Here is a 714-residue protein sequence, read N- to C-terminus: MAEEVITPVYCTGVSAQVQKLRAKELGLGRHENAIKYLGQDYEQLRAHCLQSGSLFRDEAFPPVPQSLGFKELGPNSSKTYGVKWKRPTELFSNPQFIVDGATRTDICQGALGDCWLLAAIASLTLNDTLLHRVVPHGQSFQNGYAGIFHFQLWQFGEWVDVVVDDLLPTKDGKLVFVHSAQGNEFWSALLEKAYAKVNGSYEALSGGSTSEGFEDFTGGVTEWYELRKAPSDLYSIILKALERGSLLGCSIDISSVLDMEAVTFKKLVKGHAYSVTGAKQVNYQGQMVNLIRMRNPWGEVEWTGAWSDGSSEWNGVDPYQRDQLRVRMEDGEFWMSFRDFLREFTRLEICNLTPDALKSQRVRNWNTTLYEGTWRRGSTAGGCRNYPATFWVNPQFKIRLEETDDPEDDYGGRESGCSFVLALMQKHRRRERRFGRDMETIGFAVYEVPPELVGQPVHLKRDFFLANASRARSEQFINLREVSTRFRLPPGEYVVVPSTFEPNKEGDFVLRFFSEKKAGTQELDDQVQAILPDEQVLSEEEIDENFKALFRQLAGEDMEISVRELRTILNRIISKHKDLRTKGFSLESCRSMVNLMDRDGNGKLGLVEFNILWNRIRNYLSIFRKFDLDKSGSMSAYEMRMAIESAGFKLNKKLFELIITRYSEPDLAVDFDNFVCCLVRLETMFRFFKTLDTDLDGVVTFDLFKWLQLTMFA.

Residues 55 to 354 (LFRDEAFPPV…FTRLEICNLT (300 aa)) enclose the Calpain catalytic domain. Positions 109 and 114 each coordinate Ca(2+). Catalysis depends on residues Cys-115, His-272, and Asn-296. Positions 318 and 323 each coordinate Ca(2+). The residue at position 354 (Thr-354) is a Phosphothreonine. The segment at 355-526 (PDALKSQRVR…KKAGTQELDD (172 aa)) is domain III. The tract at residues 527 to 542 (QVQAILPDEQVLSEEE) is linker. The tract at residues 543-713 (IDENFKALFR…LFKWLQLTMF (171 aa)) is domain IV. 3 consecutive EF-hand domains span residues 585–618 (FSLESCRSMVNLMDRDGNGKLGLVEFNILWNRIR), 615–650 (NRIRNYLSIFRKFDLDKSGSMSAYEMRMAIESAGFK), and 680–714 (VRLETMFRFFKTLDTDLDGVVTFDLFKWLQLTMFA). Ca(2+) is bound by residues Asp-598, Asp-600, Asn-602, Lys-604, Glu-609, Asp-628, Asp-630, Ser-632, Ser-634, and Glu-639.

The protein belongs to the peptidase C2 family. As to quaternary structure, forms a heterodimer with a small (regulatory) subunit CAPNS1. Ca(2+) serves as cofactor. Post-translationally, undergoes calcium-induced successive autoproteolytic cleavages that generate a membrane-bound 78 kDa active form and an intracellular 75 kDa active form. Calpastatin reduces with high efficiency the transition from 78 kDa to 75 kDa calpain forms.

The protein localises to the cytoplasm. It is found in the cell membrane. The enzyme catalyses Broad endopeptidase specificity.. Its activity is regulated as follows. Activated by micromolar concentrations of calcium and inhibited by calpastatin. Functionally, calcium-regulated non-lysosomal thiol-protease which catalyzes limited proteolysis of substrates involved in cytoskeletal remodeling and signal transduction. Proteolytically cleaves CTBP1. Cleaves and activates caspase-7 (CASP7). The sequence is that of Calpain-1 catalytic subunit from Sus scrofa (Pig).